A 1130-amino-acid polypeptide reads, in one-letter code: MHC class II transactivator (1130 aa).

The required for acetyltransferase activity stretch occupies residues 94 to 132 (AYANIAELDQYVFQDSQLEGLSKDIFKHIGPDEVIGESM). The interval 269–303 (PSGFTVHGLPTSPDRPGSTSPFAPSATDLPSMPEP) is disordered. The NACHT domain maps to 414 to 724 (RVIAVLGKAG…CFLGALWLAL (311 aa)). Residue 420 to 427 (GKAGQGKS) coordinates GTP. 4 LRR repeats span residues 985–1008 (SLQHLDLDALSENKIGDEGVSQLS), 1016–1037 (SLETLNLSQNNITDLGAYKLAE), 1045–1066 (SLLRLSLYNNCICDVGAESLAR), and 1073–1093 (SLRVMDVQYNKFTAAGAQQLA).

Interacts with ZXDA and ZXDC. Interacts with PML (isoform PML-2). Interacts with TAF7; interaction inhibits CIITA acetyltransferase activity, thereby repressing transcription. Autophosphorylated, affecting interaction with TAF7.

It localises to the nucleus. The protein localises to the PML body. The catalysed reaction is L-seryl-[protein] + ATP = O-phospho-L-seryl-[protein] + ADP + H(+). The enzyme catalyses L-threonyl-[protein] + ATP = O-phospho-L-threonyl-[protein] + ADP + H(+). Functionally, essential for transcriptional activity of the HLA class II promoter; activation is via the proximal promoter. Does not bind DNA. May act in a coactivator-like fashion through protein-protein interactions by contacting factors binding to the proximal MHC class II promoter, to elements of the transcription machinery, or both PubMed:8402893, PubMed:7749984,. Alternatively it may activate HLA class II transcription by modifying proteins that bind to the MHC class II promoter. Also mediates enhanced MHC class I transcription; the promoter element requirements for CIITA-mediated transcription are distinct from those of constitutive MHC class I transcription, and CIITA can functionally replace TAF1 at these genes. Activates CD74 transcription. Exhibits intrinsic GTP-stimulated acetyltransferase activity. Exhibits serine/threonine protein kinase activity: can phosphorylate the TFIID component TAF7, the RAP74 subunit of the general transcription factor TFIIF, histone H2B at 'Ser-37' and other histones (in vitro). Has antiviral activity against Ebola virus and coronaviruses, including SARS-CoV-2. Induces resistance by up-regulation of the p41 isoform of CD74, which blocks cathepsin-mediated cleavage of viral glycoproteins, thereby preventing viral fusion. Exhibits dominant-negative suppression of MHC class II gene expression. The protein is MHC class II transactivator of Homo sapiens (Human).